Here is a 120-residue protein sequence, read N- to C-terminus: Spermidine export protein MdtJ (120 aa).

The next 4 membrane-spanning stretches (helical) occupy residues 1 to 21, 31 to 51, 54 to 74, and 81 to 101; these read MFYW…TLSM, AGFI…SFAV, IALG…ITIF, and EALS…IVLI.

Belongs to the drug/metabolite transporter (DMT) superfamily. Small multidrug resistance (SMR) (TC 2.A.7.1) family. MdtJ subfamily. As to quaternary structure, forms a complex with MdtI.

It localises to the cell inner membrane. Its function is as follows. Catalyzes the excretion of spermidine. The protein is Spermidine export protein MdtJ of Salmonella agona (strain SL483).